A 155-amino-acid polypeptide reads, in one-letter code: Rhombotin-1 (155 aa).

2 consecutive LIM zinc-binding domains span residues 21-83 and 85-147; these read KGCA…LFGT and GNCA…GQLN.

The protein localises to the nucleus. May be involved in gene regulation within neural lineage cells potentially by direct DNA binding or by binding to other transcription factors. The sequence is that of Rhombotin-1 from Danio rerio (Zebrafish).